The following is a 339-amino-acid chain: Geranylgeranyl transferase type-2 subunit beta (339 aa).

The residue at position 11 (threonine 11) is a Phosphothreonine. PFTB repeat units follow at residues 28-69 (LEKH…DLMG), 76-117 (REEI…TLYD), 124-165 (VDKV…ALLG), 172-213 (VEKA…AITS), 220-261 (SDLL…KIIG), and 268-310 (REKL…SLLG). Geranylgeranyl diphosphate is bound by residues 198-200 (HAG) and 240-243 (RPEK). 2 residues coordinate Zn(2+): aspartate 246 and cysteine 248. Geranylgeranyl diphosphate contacts are provided by residues tyrosine 249 and 249 to 252 (YSWW). Zn(2+) is bound at residue histidine 298.

Belongs to the protein prenyltransferase subunit beta family. As to quaternary structure, heterotrimer composed of RABGGTA, RABGGTB and CHM; within this trimer, RABGGTA and RABGGTB form the catalytic component B, while CHM (component A) mediates peptide substrate binding. The Rab GGTase dimer (RGGT) interacts with CHM (component A) prior to Rab protein binding; the association is stabilized by geranylgeranyl pyrophosphate (GGpp). The CHM:RGGT:Rab complex is destabilized by GGpp. Interaction of RABGGTB with prenylated PTP4A2 precludes its association with RABGGTA and inhibits enzyme activity. Interacts with CHODL. Interacts with non-phosphorylated form of RAB8A; phosphorylation of RAB8A at 'Thr-72' disrupts this interaction. Zn(2+) serves as cofactor. Ubiquitous. Detected in all the major organs in adult animals.

The enzyme catalyses geranylgeranyl diphosphate + L-cysteinyl-[protein] = S-geranylgeranyl-L-cysteinyl-[protein] + diphosphate. Its activity is regulated as follows. The enzymatic reaction requires the aid of a Rab escort protein (also called component A), such as CHM. Its function is as follows. Catalyzes the transfer of a geranylgeranyl moiety from geranylgeranyl diphosphate to both cysteines of Rab proteins with the C-terminal sequence -XXCC, -XCXC and -CCXX, such as RAB1A, RAB3A, RAB5A and RAB7A. This chain is Geranylgeranyl transferase type-2 subunit beta (Rabggtb), found in Mus musculus (Mouse).